We begin with the raw amino-acid sequence, 234 residues long: Sugar fermentation stimulation protein homolog (234 aa).

It belongs to the SfsA family.

The sequence is that of Sugar fermentation stimulation protein homolog from Bartonella quintana (strain Toulouse) (Rochalimaea quintana).